Here is a 73-residue protein sequence, read N- to C-terminus: Aldehyde dehydrogenase (73 aa).

It belongs to the aldehyde dehydrogenase family.

It catalyses the reaction an aldehyde + NAD(+) + H2O = a carboxylate + NADH + 2 H(+). The protein operates within alcohol metabolism; ethanol degradation; acetate from ethanol: step 2/2. This Geobacillus stearothermophilus (Bacillus stearothermophilus) protein is Aldehyde dehydrogenase.